The primary structure comprises 141 residues: MMTERTFSIIKSDAVKRNLIGAILTRFEQNGFKIIASKMVRLTREQAEGFYAEHQGKEFFAPLVEYMMSSPIVVSVLEKENAVKDYRTLIGTTNPETAEEGTIRKDFALSQRENSVHGSDSIENANREIAYFFTDCEIFER.

Lys-11, Phe-59, Arg-87, Thr-93, Arg-104, and Asn-114 together coordinate ATP. Catalysis depends on His-117, which acts as the Pros-phosphohistidine intermediate.

It belongs to the NDK family. As to quaternary structure, homotetramer. It depends on Mg(2+) as a cofactor.

It is found in the cytoplasm. The enzyme catalyses a 2'-deoxyribonucleoside 5'-diphosphate + ATP = a 2'-deoxyribonucleoside 5'-triphosphate + ADP. It carries out the reaction a ribonucleoside 5'-diphosphate + ATP = a ribonucleoside 5'-triphosphate + ADP. Major role in the synthesis of nucleoside triphosphates other than ATP. The ATP gamma phosphate is transferred to the NDP beta phosphate via a ping-pong mechanism, using a phosphorylated active-site intermediate. The protein is Nucleoside diphosphate kinase of Haemophilus influenzae (strain 86-028NP).